The chain runs to 414 residues: Carboxynorspermidine synthase (414 aa).

Belongs to the saccharopine dehydrogenase family. Carboxynorspermidine synthase subfamily. Homodimer.

The catalysed reaction is carboxynorspermidine + NADP(+) + H2O = L-aspartate 4-semialdehyde + propane-1,3-diamine + NADPH + H(+). It carries out the reaction carboxyspermidine + NADP(+) + H2O = L-aspartate 4-semialdehyde + putrescine + NADPH + H(+). Activated by dithiothreitol and inhibited by SH-reactive compounds. Involved in norspermidine biosynthesis. Catalyzes the synthesis of carboxynorspermidine from L-aspartate 4-semialdehyde and 1,3-diaminopropane. Is also slightly active with putrescine as a substrate. This is Carboxynorspermidine synthase from Vibrio alginolyticus (strain ATCC 17749 / DSM 2171 / NBRC 15630 / NCIMB 1903 / NCTC 12160 / XII-53).